A 440-amino-acid polypeptide reads, in one-letter code: MFFISKLSLSNIHVRLTAKGLLRNLQLLSGCKLAVGFLAVDKNKSRTNSKNPQPPTNGQPDLVPPESKSRNVEYYKAQCEKKNQTIRQLENTLLSNNRRFEAVAVVIKHLYAEHDEVMKQRRDLSQELVTLREELVSSGHSCERLEQEKEDLRSAFDGVLQKVQEQHRLDLADLEERLKTFYSTEWEKVHQAYQEEADKCKAQMEQQLEEIRSKHEALKKELESSHIEEVDGLKQQFEESFKGFKQSHEKEMQNLNETLKESEETLSNQIQDLMTENDSLKEKLNAEVKRRMELAEKTQDSHTLYLEQELESLKVVLDIKNKQIHEQDKKLMQIDKLMERNVKLDECLKKLQQENEDLKARMDRHAALSRQLSTEQAVLQESLQKESKVNKRLSMENEELLWKLHNGDLNSPRKISPSPSLNLQSPRTSGMFSSPPVSPR.

Positions 44–67 (KSRTNSKNPQPPTNGQPDLVPPES) are disordered. The stretch at 69-401 (SRNVEYYKAQ…RLSMENEELL (333 aa)) forms a coiled coil. The disordered stretch occupies residues 407–440 (GDLNSPRKISPSPSLNLQSPRTSGMFSSPPVSPR). Residues 417–432 (PSPSLNLQSPRTSGMF) show a composition bias toward polar residues.

It belongs to the MTUS1 family. In terms of assembly, homodimer.

It localises to the mitochondrion. The protein localises to the golgi apparatus. It is found in the cell membrane. Its subcellular location is the nucleus. Its function is as follows. May inhibit cell proliferation. The chain is Microtubule-associated tumor suppressor 1 homolog A (mtus1a) from Danio rerio (Zebrafish).